The primary structure comprises 68 residues: ATP synthase F(0) complex subunit 8 (68 aa).

Residues 8-24 (VWPTIITSMLLTLFLLM) form a helical membrane-spanning segment. An N6-acetyllysine; alternate modification is found at Lys-54. Lys-54 carries the N6-succinyllysine; alternate modification. Lys-57 bears the N6-acetyllysine mark.

It belongs to the ATPase protein 8 family. Component of the ATP synthase complex composed at least of ATP5F1A/subunit alpha, ATP5F1B/subunit beta, ATP5MC1/subunit c (homooctomer), MT-ATP6/subunit a, MT-ATP8/subunit 8, ATP5ME/subunit e, ATP5MF/subunit f, ATP5MG/subunit g, ATP5MK/subunit k, ATP5MJ/subunit j, ATP5F1C/subunit gamma, ATP5F1D/subunit delta, ATP5F1E/subunit epsilon, ATP5PF/subunit F6, ATP5PB/subunit b, ATP5PD/subunit d, ATP5PO/subunit OSCP. ATP synthase complex consists of a soluble F(1) head domain (subunits alpha(3) and beta(3)) - the catalytic core - and a membrane F(0) domain - the membrane proton channel (subunits c, a, 8, e, f, g, k and j). These two domains are linked by a central stalk (subunits gamma, delta, and epsilon) rotating inside the F1 region and a stationary peripheral stalk (subunits F6, b, d, and OSCP). Interacts with PRICKLE3.

The protein resides in the mitochondrion membrane. Functionally, subunit 8, of the mitochondrial membrane ATP synthase complex (F(1)F(0) ATP synthase or Complex V) that produces ATP from ADP in the presence of a proton gradient across the membrane which is generated by electron transport complexes of the respiratory chain. ATP synthase complex consist of a soluble F(1) head domain - the catalytic core - and a membrane F(1) domain - the membrane proton channel. These two domains are linked by a central stalk rotating inside the F(1) region and a stationary peripheral stalk. During catalysis, ATP synthesis in the catalytic domain of F(1) is coupled via a rotary mechanism of the central stalk subunits to proton translocation. In vivo, can only synthesize ATP although its ATP hydrolase activity can be activated artificially in vitro. Part of the complex F(0) domain. This is ATP synthase F(0) complex subunit 8 from Symphalangus syndactylus (Siamang).